A 788-amino-acid chain; its full sequence is Multi-functional prenyltransferase ltmE (788 aa).

The substrate site is built by Lys18 and His51. Residue Asp58 participates in Mg(2+) binding. Substrate is bound by residues Arg67, Lys151, Thr152, Gln182, Asn189, and Lys199. The disordered stretch occupies residues 283 to 337 (DTLDGDDLTRPSTITQHEQDDHVDRAAIDAKSDASGSSNKSLTPPETAPTTDTLS). Basic and acidic residues predominate over residues 299–314 (HEQDDHVDRAAIDAKS). Positions 316–337 (ASGSSNKSLTPPETAPTTDTLS) are enriched in polar residues. Residue 404–405 (MA) participates in L-tryptophan binding. Substrate contacts are provided by Arg427, Arg599, Lys601, Tyr603, and Tyr687.

The protein in the N-terminal section; belongs to the FPP/GGPP synthase family. This sequence in the C-terminal section; belongs to the tryptophan dimethylallyltransferase family. Mg(2+) is required as a cofactor.

It participates in secondary metabolite biosynthesis. Multi-functional prenyltransferase; part of the gene cluster that mediates the biosynthesis of lolitrems, indole-diterpene mycotoxins that are potent tremorgens in mammals, and are synthesized by clavicipitaceous fungal endophytes in association with their grass hosts. The geranylgeranyl diphosphate (GGPP) synthase ltmG is proposed to catalyze the first step in lolitrem biosynthesis. LtmG catalyzes a series of iterative condensations of isopentenyl diphosphate (IPP) with dimethylallyl diphosphate (DMAPP), geranyl diphosphate (GPP), and farnesyl diphosphate (FPP), to form GGPP. GGPP then condenses with indole-3-glycerol phosphate to form 3-geranylgeranylindole, an acyclic intermediate, to be incorporated into paxilline. Either ltmG or ltmC could be responsible for this step, as both are putative prenyl transferases. The FAD-dependent monooxygenase ltmM then catalyzes the epoxidation of the two terminal alkenes of the geranylgeranyl moiety, which is subsequently cyclized by ltmB, to paspaline. The cytochrome P450 monooxygenases ltmQ and ltmP can sequentially oxidize paspaline to terpendole E and terpendole F. Alternatively, ltmP converts paspaline to an intermediate which is oxidized by ltmQ to terpendole F. LtmF, ltmK, ltmE and ltmJ appear to be unique to the epichloe endophytes. The prenyltransferase ltmF is involved in the 27-hydroxyl-O-prenylation. The cytochrome P450 monooxygenase ltmK is required for the oxidative acetal ring formation. The multi-functional prenyltransferase ltmE is required for C20- and C21-prenylations of the indole ring of paspalanes and acts together with the cytochrome P450 monooxygenase ltmJ to yield lolitremanes by multiple oxidations and ring closures. The stereoisomer pairs of lolitriol and lolitrem N or lolitrem B and lolitrem F may be attributed to variations in the way in which ring closure can occur under the action of ltmJ. While the major product of this pathway is lolitrem B, the prenyl transferases and cytochrome P450 monooxygenases identified in this pathway have a remarkable versatility in their regio- and stereo-specificities to generate a diverse range of metabolites that are products of a metabolic grid rather than a linear pathway. The polypeptide is Multi-functional prenyltransferase ltmE (Epichloe festucae var. lolii (Neotyphodium lolii)).